The primary structure comprises 102 residues: Co-chaperonin GroES (102 aa).

This sequence belongs to the GroES chaperonin family. As to quaternary structure, heptamer of 7 subunits arranged in a ring. Interacts with the chaperonin GroEL.

It localises to the cytoplasm. In terms of biological role, together with the chaperonin GroEL, plays an essential role in assisting protein folding. The GroEL-GroES system forms a nano-cage that allows encapsulation of the non-native substrate proteins and provides a physical environment optimized to promote and accelerate protein folding. GroES binds to the apical surface of the GroEL ring, thereby capping the opening of the GroEL channel. The polypeptide is Co-chaperonin GroES (Chlamydia pneumoniae (Chlamydophila pneumoniae)).